Consider the following 244-residue polypeptide: MTEMILELLPAVDVADGQAVRLVQGEAGSETSYGAPIDAALAWQQDGAEWVHLVDLDAAFDRGSNLALLRDVVAQLNVKVELSGGIRDDASLEGALKLGAERVNLGTAALEDPVWTARAIERFGDKIAVGLDVRGTTLAARGWTKDGGDLWEVLARLEDAGCARYVVTDVTKDGTLRGPNIELLQQMLERTDRPVVASGGVSSLDDLVQLRALVPHGLEGAIVGKALYAGAFTLPEALDVAGRR.

The Proton acceptor role is filled by D13. The active-site Proton donor is D132.

It belongs to the HisA/HisF family.

It localises to the cytoplasm. It carries out the reaction 1-(5-phospho-beta-D-ribosyl)-5-[(5-phospho-beta-D-ribosylamino)methylideneamino]imidazole-4-carboxamide = 5-[(5-phospho-1-deoxy-D-ribulos-1-ylimino)methylamino]-1-(5-phospho-beta-D-ribosyl)imidazole-4-carboxamide. Its pathway is amino-acid biosynthesis; L-histidine biosynthesis; L-histidine from 5-phospho-alpha-D-ribose 1-diphosphate: step 4/9. This Renibacterium salmoninarum (strain ATCC 33209 / DSM 20767 / JCM 11484 / NBRC 15589 / NCIMB 2235) protein is 1-(5-phosphoribosyl)-5-[(5-phosphoribosylamino)methylideneamino] imidazole-4-carboxamide isomerase.